The sequence spans 311 residues: tRNA-cytidine(32) 2-sulfurtransferase (311 aa).

A PP-loop motif motif is present at residues 45-50 (SGGKDS). The [4Fe-4S] cluster site is built by cysteine 120, cysteine 123, and cysteine 211.

Belongs to the TtcA family. In terms of assembly, homodimer. Mg(2+) is required as a cofactor. It depends on [4Fe-4S] cluster as a cofactor.

It is found in the cytoplasm. The catalysed reaction is cytidine(32) in tRNA + S-sulfanyl-L-cysteinyl-[cysteine desulfurase] + AH2 + ATP = 2-thiocytidine(32) in tRNA + L-cysteinyl-[cysteine desulfurase] + A + AMP + diphosphate + H(+). It functions in the pathway tRNA modification. Functionally, catalyzes the ATP-dependent 2-thiolation of cytidine in position 32 of tRNA, to form 2-thiocytidine (s(2)C32). The sulfur atoms are provided by the cysteine/cysteine desulfurase (IscS) system. The chain is tRNA-cytidine(32) 2-sulfurtransferase from Shewanella pealeana (strain ATCC 700345 / ANG-SQ1).